The primary structure comprises 129 residues: Small ribosomal subunit protein uS11 (129 aa).

Belongs to the universal ribosomal protein uS11 family. As to quaternary structure, part of the 30S ribosomal subunit. Interacts with proteins S7 and S18. Binds to IF-3.

Functionally, located on the platform of the 30S subunit, it bridges several disparate RNA helices of the 16S rRNA. Forms part of the Shine-Dalgarno cleft in the 70S ribosome. This chain is Small ribosomal subunit protein uS11, found in Bacteroides thetaiotaomicron (strain ATCC 29148 / DSM 2079 / JCM 5827 / CCUG 10774 / NCTC 10582 / VPI-5482 / E50).